We begin with the raw amino-acid sequence, 568 residues long: Urease subunit alpha (568 aa).

The 439-residue stretch at 130-568 (GGIDTHIHFI…LPMAQRYFLF (439 aa)) folds into the Urease domain. Residues His-135, His-137, and Lys-218 each contribute to the Ni(2+) site. Lys-218 is subject to N6-carboxylysine. His-220 lines the substrate pocket. Ni(2+) is bound by residues His-247 and His-273. His-321 acts as the Proton donor in catalysis. Ni(2+) is bound at residue Asp-361.

This sequence belongs to the metallo-dependent hydrolases superfamily. Urease alpha subunit family. Heterotrimer of UreA (gamma), UreB (beta) and UreC (alpha) subunits. Three heterotrimers associate to form the active enzyme. Ni cation is required as a cofactor. Carboxylation allows a single lysine to coordinate two nickel ions.

It is found in the cytoplasm. The enzyme catalyses urea + 2 H2O + H(+) = hydrogencarbonate + 2 NH4(+). The protein operates within nitrogen metabolism; urea degradation; CO(2) and NH(3) from urea (urease route): step 1/1. This Burkholderia multivorans (strain ATCC 17616 / 249) protein is Urease subunit alpha.